Consider the following 500-residue polypeptide: Centrosomal protein of 57 kDa (500 aa).

The span at 1–16 (MAAASVSAASDSQFSS) shows a compositional bias: low complexity. The disordered stretch occupies residues 1 to 59 (MAAASVSAASDSQFSSVLAEPSRSNGNMVRHSSSPYVLYPPDKPFLNSDLRRSPNKPTF). The span at 22–35 (SRSNGNMVRHSSSP) shows a compositional bias: polar residues. Ser53 is modified (phosphoserine). Residues 58 to 239 (TFAYPESNSR…RAAELQSGLE (182 aa)) form a centrosome localization domain (CLD) region. A coiled-coil region spans residues 63 to 242 (ESNSRAIFSA…ELQSGLEANR (180 aa)). Disordered stretches follow at residues 256-275 (STRKIKKKKSKPPEKKGSRT) and 432-478 (QKKE…RKNL). The mediates interaction with microtubules stretch occupies residues 278-491 (GAQPHYRLCL…KDMQTIQNSL (214 aa)). A coiled-coil region spans residues 389–449 (TVELKDNLEC…KKTLDEEGNS (61 aa)). 2 stretches are compositionally biased toward basic and acidic residues: residues 432-444 (QKKELKANKKTLD) and 461-475 (SKKDLAKQRPGEKSR).

The protein belongs to the translokin family. In terms of assembly, interacts with FGF2 and RAP80. Does not interact with FGF1 or FGF2 isoform 24 kDa. Homodimer and homooligomer. Interacts with microtubules. As to expression, ubiquitous (at protein level). Expressed in testis, predominantly in round spermatids. Low expression is detected in other tissues.

The protein resides in the nucleus. It is found in the cytoplasm. It localises to the cytoskeleton. The protein localises to the microtubule organizing center. Its subcellular location is the centrosome. Centrosomal protein which may be required for microtubule attachment to centrosomes. May act by forming ring-like structures around microtubules. Mediates nuclear translocation and mitogenic activity of the internalized growth factor FGF2. This chain is Centrosomal protein of 57 kDa (Cep57), found in Mus musculus (Mouse).